Here is a 51-residue protein sequence, read N- to C-terminus: SPbeta prophage-derived uncharacterized protein YorQ (51 aa).

The chain is SPbeta prophage-derived uncharacterized protein YorQ (yorQ) from Bacillus subtilis (strain 168).